We begin with the raw amino-acid sequence, 470 residues long: ATP synthase subunit beta (470 aa).

An ATP-binding site is contributed by 155-162; that stretch reads GGAGVGKT.

It belongs to the ATPase alpha/beta chains family. In terms of assembly, F-type ATPases have 2 components, CF(1) - the catalytic core - and CF(0) - the membrane proton channel. CF(1) has five subunits: alpha(3), beta(3), gamma(1), delta(1), epsilon(1). CF(0) has three main subunits: a(1), b(2) and c(9-12). The alpha and beta chains form an alternating ring which encloses part of the gamma chain. CF(1) is attached to CF(0) by a central stalk formed by the gamma and epsilon chains, while a peripheral stalk is formed by the delta and b chains.

The protein resides in the cell membrane. The enzyme catalyses ATP + H2O + 4 H(+)(in) = ADP + phosphate + 5 H(+)(out). Produces ATP from ADP in the presence of a proton gradient across the membrane. The catalytic sites are hosted primarily by the beta subunits. The polypeptide is ATP synthase subunit beta (Staphylococcus saprophyticus subsp. saprophyticus (strain ATCC 15305 / DSM 20229 / NCIMB 8711 / NCTC 7292 / S-41)).